A 199-amino-acid polypeptide reads, in one-letter code: Chaperone protein TorD (199 aa).

The protein belongs to the TorD/DmsD family. TorD subfamily.

The protein resides in the cytoplasm. Involved in the biogenesis of TorA. Acts on TorA before the insertion of the molybdenum cofactor and, as a result, probably favors a conformation of the apoenzyme that is competent for acquiring the cofactor. This Escherichia coli O6:H1 (strain CFT073 / ATCC 700928 / UPEC) protein is Chaperone protein TorD.